We begin with the raw amino-acid sequence, 331 residues long: Anthranilate phosphoribosyltransferase (331 aa).

5-phospho-alpha-D-ribose 1-diphosphate-binding positions include G79, 82 to 83, S87, 89 to 92, 107 to 115, and S119; these read GD, NIST, and KHCNTSISS. Residue G79 participates in anthranilate binding. A Mg(2+)-binding site is contributed by S91. Position 110 (N110) interacts with anthranilate. R165 contributes to the anthranilate binding site. Residues D223 and E224 each contribute to the Mg(2+) site.

This sequence belongs to the anthranilate phosphoribosyltransferase family. As to quaternary structure, homodimer. It depends on Mg(2+) as a cofactor.

The enzyme catalyses N-(5-phospho-beta-D-ribosyl)anthranilate + diphosphate = 5-phospho-alpha-D-ribose 1-diphosphate + anthranilate. It functions in the pathway amino-acid biosynthesis; L-tryptophan biosynthesis; L-tryptophan from chorismate: step 2/5. Functionally, catalyzes the transfer of the phosphoribosyl group of 5-phosphorylribose-1-pyrophosphate (PRPP) to anthranilate to yield N-(5'-phosphoribosyl)-anthranilate (PRA). The protein is Anthranilate phosphoribosyltransferase of Buchnera aphidicola subsp. Schlechtendalia chinensis.